Consider the following 236-residue polypeptide: Eukaryotic translation initiation factor 3 subunit K (236 aa).

The region spanning 42–222 is the PCI domain; that stretch reads YDKDILVTTL…TIKSRNIEEK (181 aa).

This sequence belongs to the eIF-3 subunit K family. As to quaternary structure, component of the eukaryotic translation initiation factor 3 (eIF-3) complex.

It localises to the cytoplasm. Component of the eukaryotic translation initiation factor 3 (eIF-3) complex, which is involved in protein synthesis of a specialized repertoire of mRNAs and, together with other initiation factors, stimulates binding of mRNA and methionyl-tRNAi to the 40S ribosome. The eIF-3 complex specifically targets and initiates translation of a subset of mRNAs involved in cell proliferation. The sequence is that of Eukaryotic translation initiation factor 3 subunit K from Brugia malayi (Filarial nematode worm).